The chain runs to 224 residues: Ribosomal RNA small subunit methyltransferase G (224 aa).

Residues Gly-89, Phe-94, 140-141, and Arg-153 each bind S-adenosyl-L-methionine; that span reads AE.

This sequence belongs to the methyltransferase superfamily. RNA methyltransferase RsmG family.

The protein localises to the cytoplasm. In terms of biological role, specifically methylates the N7 position of a guanine in 16S rRNA. This Bacteroides fragilis (strain YCH46) protein is Ribosomal RNA small subunit methyltransferase G.